A 298-amino-acid polypeptide reads, in one-letter code: Bifunctional protein FolD (298 aa).

Residues 166–168 (GRS), Ser-191, and Ile-232 contribute to the NADP(+) site.

The protein belongs to the tetrahydrofolate dehydrogenase/cyclohydrolase family. In terms of assembly, homodimer.

The enzyme catalyses (6R)-5,10-methylene-5,6,7,8-tetrahydrofolate + NADP(+) = (6R)-5,10-methenyltetrahydrofolate + NADPH. The catalysed reaction is (6R)-5,10-methenyltetrahydrofolate + H2O = (6R)-10-formyltetrahydrofolate + H(+). It participates in one-carbon metabolism; tetrahydrofolate interconversion. Its function is as follows. Catalyzes the oxidation of 5,10-methylenetetrahydrofolate to 5,10-methenyltetrahydrofolate and then the hydrolysis of 5,10-methenyltetrahydrofolate to 10-formyltetrahydrofolate. The polypeptide is Bifunctional protein FolD (Erythrobacter litoralis (strain HTCC2594)).